The following is a 232-amino-acid chain: Enolase-phosphatase E1 (232 aa).

This sequence belongs to the HAD-like hydrolase superfamily. MasA/MtnC family. As to quaternary structure, monomer. Requires Mg(2+) as cofactor.

It catalyses the reaction 5-methylsulfanyl-2,3-dioxopentyl phosphate + H2O = 1,2-dihydroxy-5-(methylsulfanyl)pent-1-en-3-one + phosphate. It participates in amino-acid biosynthesis; L-methionine biosynthesis via salvage pathway; L-methionine from S-methyl-5-thio-alpha-D-ribose 1-phosphate: step 3/6. The protein operates within amino-acid biosynthesis; L-methionine biosynthesis via salvage pathway; L-methionine from S-methyl-5-thio-alpha-D-ribose 1-phosphate: step 4/6. Functionally, bifunctional enzyme that catalyzes the enolization of 2,3-diketo-5-methylthiopentyl-1-phosphate (DK-MTP-1-P) into the intermediate 2-hydroxy-3-keto-5-methylthiopentenyl-1-phosphate (HK-MTPenyl-1-P), which is then dephosphorylated to form the acireductone 1,2-dihydroxy-3-keto-5-methylthiopentene (DHK-MTPene). In Xanthomonas campestris pv. campestris (strain B100), this protein is Enolase-phosphatase E1.